Reading from the N-terminus, the 743-residue chain is MEQTYQYAWIIPFLPLPVPMLIGLGLLLFPTATKSLRRMWAFQSVLLLSIVMIFSLNLSIQQINSSSVYQYVWSWIINNDFSLEFGYLIDPLTSIMSILITTVGIMVLIYSDNYMSHDHGYLRFFAYMSFFSTSMLGLVTSSNLIQIYIFWELVGMCSYLLIGFWFTRPVAAKACQKAFVTNRVGDFGLLLGILGFYWITGSFEFRDLFQIFNNLISNNEVNSVFVTLCAVLLFAGAIAKSAQFPLHVWLPDAMEGPTPISALIHAATMVAAGIFLVARLMPLFIVIPHIMNFISFIGIITVFFGATLALAQKDIKRGLAYSTMSQLGYMMLALGMGSYRSALFHLITHAYSKALLFLGSGSVIHSMETLVGYCPKKSQNMVLMGGLKKHVPITKNSFLLGTLSLCGIPPLACFWSKDEILNDSWLYSPIFAIIAWSTAGFTAFYMCRIYLLTFEGHLNVHFQNYSGKRNTPLYLISLWGKEGSKISNKNLNFCLVTLLKMNKNGRPSFFSNKVYKMDENGRNLIQPFLSIPNFSNTKTSLYPYESDNTMLFPILILILFTLFVGFLGIPFNQDVDILSKWLTPSINLLHQSSNNSIDWYEFCKDAVFSVSIACFGIYIAFFLYKPVYSSFQNLDLINSVVKMGPKRIFSDKIKNAIYDWSYNRGYIDAFYGTFFTAGVRKLAEFTHFFDRRIIDGIPNGVGFMSFFVAEVIKSVGGGRISSYLFFYFSYVSIFLLIYYFLNL.

16 consecutive transmembrane segments (helical) span residues 9–29 (WIIP…LLLF), 40–60 (WAFQ…NLSI), 89–109 (IDPL…MVLI), 125–145 (FAYM…SNLI), 147–167 (IYIF…FWFT), 185–205 (GDFG…SFEF), 224–244 (VFVT…SAQF), 258–278 (TPIS…FLVA), 284–304 (FIVI…TVFF), 327–347 (LGYM…FHLI), 354–374 (ALLF…VGYC), 396–416 (NSFL…CFWS), 425–445 (WLYS…TAFY), 551–571 (LFPI…GIPF), 607–627 (VFSV…YKPV), and 723–743 (YLFF…FLNL).

This sequence belongs to the complex I subunit 5 family. As to quaternary structure, NDH is composed of at least 16 different subunits, 5 of which are encoded in the nucleus.

It localises to the plastid. The protein resides in the chloroplast thylakoid membrane. The enzyme catalyses a plastoquinone + NADH + (n+1) H(+)(in) = a plastoquinol + NAD(+) + n H(+)(out). The catalysed reaction is a plastoquinone + NADPH + (n+1) H(+)(in) = a plastoquinol + NADP(+) + n H(+)(out). Its function is as follows. NDH shuttles electrons from NAD(P)H:plastoquinone, via FMN and iron-sulfur (Fe-S) centers, to quinones in the photosynthetic chain and possibly in a chloroplast respiratory chain. The immediate electron acceptor for the enzyme in this species is believed to be plastoquinone. Couples the redox reaction to proton translocation, and thus conserves the redox energy in a proton gradient. This is NAD(P)H-quinone oxidoreductase subunit 5, chloroplastic (ndhF) from Helianthus annuus (Common sunflower).